We begin with the raw amino-acid sequence, 259 residues long: Indole-3-glycerol phosphate synthase (259 aa).

The protein belongs to the TrpC family.

The enzyme catalyses 1-(2-carboxyphenylamino)-1-deoxy-D-ribulose 5-phosphate + H(+) = (1S,2R)-1-C-(indol-3-yl)glycerol 3-phosphate + CO2 + H2O. It participates in amino-acid biosynthesis; L-tryptophan biosynthesis; L-tryptophan from chorismate: step 4/5. The protein is Indole-3-glycerol phosphate synthase of Rhodopirellula baltica (strain DSM 10527 / NCIMB 13988 / SH1).